We begin with the raw amino-acid sequence, 178 residues long: Large ribosomal subunit protein uL5 (178 aa).

The protein belongs to the universal ribosomal protein uL5 family. Part of the 50S ribosomal subunit; part of the 5S rRNA/L5/L18/L25 subcomplex. Contacts the 5S rRNA and the P site tRNA. Forms a bridge to the 30S subunit in the 70S ribosome.

This is one of the proteins that bind and probably mediate the attachment of the 5S RNA into the large ribosomal subunit, where it forms part of the central protuberance. In the 70S ribosome it contacts protein S13 of the 30S subunit (bridge B1b), connecting the 2 subunits; this bridge is implicated in subunit movement. Contacts the P site tRNA; the 5S rRNA and some of its associated proteins might help stabilize positioning of ribosome-bound tRNAs. This is Large ribosomal subunit protein uL5 from Prochlorococcus marinus subsp. pastoris (strain CCMP1986 / NIES-2087 / MED4).